The primary structure comprises 276 residues: Diaminopimelate epimerase (276 aa).

Asparagine 13, glutamine 46, and asparagine 66 together coordinate substrate. The active-site Proton donor is cysteine 75. Substrate is bound by residues 76 to 77 (GN), asparagine 159, asparagine 192, and 210 to 211 (ER). Cysteine 219 acts as the Proton acceptor in catalysis. 220–221 (GS) provides a ligand contact to substrate.

It belongs to the diaminopimelate epimerase family. Homodimer.

The protein localises to the cytoplasm. The catalysed reaction is (2S,6S)-2,6-diaminopimelate = meso-2,6-diaminopimelate. It functions in the pathway amino-acid biosynthesis; L-lysine biosynthesis via DAP pathway; DL-2,6-diaminopimelate from LL-2,6-diaminopimelate: step 1/1. Catalyzes the stereoinversion of LL-2,6-diaminopimelate (L,L-DAP) to meso-diaminopimelate (meso-DAP), a precursor of L-lysine and an essential component of the bacterial peptidoglycan. The chain is Diaminopimelate epimerase from Colwellia psychrerythraea (strain 34H / ATCC BAA-681) (Vibrio psychroerythus).